The primary structure comprises 1051 residues: MESHSSLSSSSSSSPPSSLSSESCCVKVAVNVRPLIGDEVTQGCRECVSVSPVTPQVQMGTHPFTFDHVYGSNGSPSSLMFEECVAPLVDGLFHGYNATVLAYGQTGSGKTYTMGTGIKDGTKNGLIPQVMSALFNKIDSVKHQMGFQLHVSFIEILKEEVLDLLDSSVPFNRLANGTPGKVVLSKSPVQIRESPNGVITLSGATEVPIATKEEMASCLEQGSLTRATGSTNMNNESSRSHAIFTITLEQMRKISSISVVKDTVDEDMGEEYCCAKLHLVDLAGSERAKRTGSGGVRLKEGIHINRGLLALGNVISALGDEKRRKEGAHVPYRDSKLTRLLQDSLGGNSKTVMIACISPADINAEETLNTLKYANRARNIQNKPVANKDLICSEMQKMRQELQYLQATLCARGATSSEEVQVMREKIMKLESANEELSRELHIYRSKRVTLDYCNIDAQEDGVIFSKDDGLKRGFESMDSDYEMSEATSGGISEDIGAAEEWEHALRQNSMGKELNELSKRLEEKESEMRVCGIGTETIRQHFEKKMMELEKEKRTVQDERDMLLAEVEELAASSDRQAQVARDNHAHKLKALETQILNLKKKQENQVEVLKQKQKSEDAAKRLKTEIQCIKAQKVQLQQKMKQEAEQFRQWKASQEKELLQLKKEGRKTEHERLKLEALNRRQKMVLQRKTEEAAMATKRLKELLEARKSSPHDISVIANGQPPSRQTNEKSLRKWLDNELEVMAKVHQVRFQYEKQIQVRAALAVELTSLRQEMEFPSNSHQEKNGQFRFLSPNTRLERIASLESMLDVSSNALTAMGSQLSEAEEREHSLHAKPRWNHIQSMTDAKYLLQYVFDSTAEARSKIWEKDRDIKEKKEQLNDLLCLLQLTEVQNREILKEKKTREQTVSIALASTSSSYSGSSRSSSKHYGDNNASDDPSSPSSTYHRATKHLKYTGPGIVNISVRESEALLEETRKMKAMKKMGQSGKLWKWKRSHHQWLLQFKWKWQKPWKLSEWIKQNDETTMHVMSKSHHDDEDDHSWNRHSMFQGA.

The segment at 1-21 is disordered; sequence MESHSSLSSSSSSSPPSSLSS. One can recognise a Kinesin motor domain in the interval 25–380; the sequence is CVKVAVNVRP…LKYANRARNI (356 aa). ATP is bound at residue 104-111; the sequence is GQTGSGKT. Coiled coils occupy residues 414–448 and 540–644; these read ATSSEEVQVMREKIMKLESANEELSRELHIYRSKR and RQHF…KMKQ. Residues 916–925 show a composition bias toward low complexity; it reads SSSYSGSSRS. Disordered regions lie at residues 916 to 946 and 1029 to 1051; these read SSSYSGSSRSSSKHYGDNNASDDPSSPSSTY and MSKSHHDDEDDHSWNRHSMFQGA.

This sequence belongs to the TRAFAC class myosin-kinesin ATPase superfamily. Kinesin family. KIN-4 subfamily. Homodimer.

Functionally, kinesin-like motor protein involved in the control of the oriented deposition of cellulose microfibrils. The chain is Kinesin-like protein KIN-4B from Arabidopsis thaliana (Mouse-ear cress).